Consider the following 260-residue polypeptide: Pyridoxine 5'-phosphate synthase (260 aa).

Asparagine 10 and arginine 21 together coordinate 3-amino-2-oxopropyl phosphate. Histidine 46 functions as the Proton acceptor in the catalytic mechanism. 1-deoxy-D-xylulose 5-phosphate is bound by residues arginine 48 and histidine 53. Glutamate 76 (proton acceptor) is an active-site residue. Position 113 (threonine 113) interacts with 1-deoxy-D-xylulose 5-phosphate. Catalysis depends on histidine 204, which acts as the Proton donor. 3-amino-2-oxopropyl phosphate is bound by residues aspartate 205 and 227-228 (GH).

It belongs to the PNP synthase family. In terms of assembly, homooctamer; tetramer of dimers.

It localises to the cytoplasm. It catalyses the reaction 3-amino-2-oxopropyl phosphate + 1-deoxy-D-xylulose 5-phosphate = pyridoxine 5'-phosphate + phosphate + 2 H2O + H(+). The protein operates within cofactor biosynthesis; pyridoxine 5'-phosphate biosynthesis; pyridoxine 5'-phosphate from D-erythrose 4-phosphate: step 5/5. Its function is as follows. Catalyzes the complicated ring closure reaction between the two acyclic compounds 1-deoxy-D-xylulose-5-phosphate (DXP) and 3-amino-2-oxopropyl phosphate (1-amino-acetone-3-phosphate or AAP) to form pyridoxine 5'-phosphate (PNP) and inorganic phosphate. The polypeptide is Pyridoxine 5'-phosphate synthase (Xylella fastidiosa (strain 9a5c)).